The primary structure comprises 125 residues: Testis-specific protein LINC02914 (125 aa).

The span at 1 to 12 shows a compositional bias: basic and acidic residues; sequence MHRKEPGARLEA. A disordered region spans residues 1–45; the sequence is MHRKEPGARLEATRGAARPHKQGTKPMITRPSVSQLGEGKCPSSQ.

In terms of tissue distribution, expressed in testes and ejaculated spermatozoa (at protein level).

It localises to the cytoplasm. It is found in the nucleus. The protein localises to the cell projection. The protein resides in the cilium. Its subcellular location is the flagellum. In terms of biological role, may play a role in the flagellum biology. The polypeptide is Testis-specific protein LINC02914 (Homo sapiens (Human)).